We begin with the raw amino-acid sequence, 220 residues long: PKHD-type hydroxylase PCC7424_1929 (220 aa).

A Fe2OG dioxygenase domain is found at 77 to 173 (KIHSLLFSRY…RLVAVGWVQS (97 aa)). Residues His-95, Asp-97, and His-154 each contribute to the Fe cation site. Arg-164 is a 2-oxoglutarate binding site.

Requires Fe(2+) as cofactor. It depends on L-ascorbate as a cofactor.

The polypeptide is PKHD-type hydroxylase PCC7424_1929 (Gloeothece citriformis (strain PCC 7424) (Cyanothece sp. (strain PCC 7424))).